The following is a 58-amino-acid chain: Conotoxin TxXIIIA (58 aa).

The first 22 residues, Met1–Ala22, serve as a signal peptide directing secretion. A propeptide spanning residues Glu23–Lys46 is cleaved from the precursor.

As to quaternary structure, homodimer; disulfide-linked. In terms of processing, 5 disulfide bonds are present in each homodimer: two intrachain disulfide bonds per subunit, and one interchain disulfide bond linking the two subunits. As to expression, expressed by the venom duct.

The protein resides in the secreted. This Conus textile (Cloth-of-gold cone) protein is Conotoxin TxXIIIA.